The sequence spans 260 residues: Ras-related protein Rab-32B (260 aa).

The tract at residues 11 to 50 is disordered; that stretch reads FDTDPDVSTDSNYNNNNNSNNNNSIISNSNNNNNNNNNNV. The span at 21–49 shows a compositional bias: low complexity; the sequence is SNYNNNNNSNNNNSIISNSNNNNNNNNNN. 66–73 lines the GTP pocket; it reads GDYAVGKS. Residues 88–96 carry the Effector region motif; it reads YKLTIGVDF. GTP-binding positions include 115 to 119 and 177 to 180; these read DIAGH and NKSD. A disordered region spans residues 231 to 260; the sequence is TNHPPKPEEDTLELTKTNGEKSDDSKSCCK. The segment covering 248-260 has biased composition (basic and acidic residues); it reads NGEKSDDSKSCCK. 2 S-geranylgeranyl cysteine lipidation sites follow: cysteine 258 and cysteine 259.

Belongs to the small GTPase superfamily. Rab family.

The chain is Ras-related protein Rab-32B (rab32B) from Dictyostelium discoideum (Social amoeba).